The chain runs to 262 residues: Hydroxyethylthiazole kinase (262 aa).

Met44 contributes to the substrate binding site. The ATP site is built by Arg118 and Thr166. Residue Gly193 coordinates substrate.

This sequence belongs to the Thz kinase family. It depends on Mg(2+) as a cofactor.

It carries out the reaction 5-(2-hydroxyethyl)-4-methylthiazole + ATP = 4-methyl-5-(2-phosphooxyethyl)-thiazole + ADP + H(+). Its pathway is cofactor biosynthesis; thiamine diphosphate biosynthesis; 4-methyl-5-(2-phosphoethyl)-thiazole from 5-(2-hydroxyethyl)-4-methylthiazole: step 1/1. Functionally, catalyzes the phosphorylation of the hydroxyl group of 4-methyl-5-beta-hydroxyethylthiazole (THZ). This is Hydroxyethylthiazole kinase from Chlamydia felis (strain Fe/C-56) (Chlamydophila felis).